Here is a 125-residue protein sequence, read N- to C-terminus: Actin, alpha skeletal muscle (125 aa).

It belongs to the actin family. In terms of assembly, polymerization of globular actin (G-actin) leads to a structural filament (F-actin) in the form of a two-stranded helix. Each actin can bind to 4 others. Post-translationally, methylated at His-75 by SETD3.

It is found in the cytoplasm. The protein resides in the cytoskeleton. Actins are highly conserved proteins that are involved in various types of cell motility and are ubiquitously expressed in all eukaryotic cells. The polypeptide is Actin, alpha skeletal muscle (Pleurodeles waltl (Iberian ribbed newt)).